Reading from the N-terminus, the 644-residue chain is Acetolactate synthase 1, chloroplastic (644 aa).

A chloroplast-targeting transit peptide spans 1-43; that stretch reads MATTAAAAAAALSAAATAKTGRKNHQRHHVLPARGRVGAAAVR. Residues 47 to 67 are disordered; sequence VSPVTPPSPAPPATPLRPWGP. Residues 50-61 show a composition bias toward pro residues; the sequence is VTPPSPAPPATP. Glu118 lines the thiamine diphosphate pocket. An intrachain disulfide couples Cys138 to Cys284. FAD-binding positions include Arg220, 326 to 347, and 369 to 388; these read HGTV…FGVR and DIDP…ICAD. A thiamine pyrophosphate binding region spans residues 461 to 541; sequence QHQMWAAQYY…VKVMVLNNQH (81 aa). Asp512 and Asn539 together coordinate Mg(2+).

This sequence belongs to the TPP enzyme family. Mg(2+) is required as a cofactor. It depends on thiamine diphosphate as a cofactor.

It is found in the plastid. It localises to the chloroplast. The enzyme catalyses 2 pyruvate + H(+) = (2S)-2-acetolactate + CO2. The protein operates within amino-acid biosynthesis; L-isoleucine biosynthesis; L-isoleucine from 2-oxobutanoate: step 1/4. It participates in amino-acid biosynthesis; L-valine biosynthesis; L-valine from pyruvate: step 1/4. The protein is Acetolactate synthase 1, chloroplastic (ALS1) of Oryza sativa subsp. japonica (Rice).